A 290-amino-acid chain; its full sequence is 4-hydroxy-tetrahydrodipicolinate synthase (290 aa).

Pyruvate is bound at residue threonine 44. Residue tyrosine 132 is the Proton donor/acceptor of the active site. Lysine 160 (schiff-base intermediate with substrate) is an active-site residue. A pyruvate-binding site is contributed by isoleucine 202.

It belongs to the DapA family. In terms of assembly, homotetramer; dimer of dimers.

It localises to the cytoplasm. The enzyme catalyses L-aspartate 4-semialdehyde + pyruvate = (2S,4S)-4-hydroxy-2,3,4,5-tetrahydrodipicolinate + H2O + H(+). It functions in the pathway amino-acid biosynthesis; L-lysine biosynthesis via DAP pathway; (S)-tetrahydrodipicolinate from L-aspartate: step 3/4. In terms of biological role, catalyzes the condensation of (S)-aspartate-beta-semialdehyde [(S)-ASA] and pyruvate to 4-hydroxy-tetrahydrodipicolinate (HTPA). This Geobacter sulfurreducens (strain ATCC 51573 / DSM 12127 / PCA) protein is 4-hydroxy-tetrahydrodipicolinate synthase.